The primary structure comprises 232 residues: Small ribosomal subunit protein uS3 (232 aa).

One can recognise a KH type-2 domain in the interval 39–107 (VRRFLEQRLK…PVHVNIEEVR (69 aa)).

Belongs to the universal ribosomal protein uS3 family. Part of the 30S ribosomal subunit. Forms a tight complex with proteins S10 and S14.

Binds the lower part of the 30S subunit head. Binds mRNA in the 70S ribosome, positioning it for translation. In Chromohalobacter salexigens (strain ATCC BAA-138 / DSM 3043 / CIP 106854 / NCIMB 13768 / 1H11), this protein is Small ribosomal subunit protein uS3.